A 337-amino-acid polypeptide reads, in one-letter code: Ketol-acid reductoisomerase (NAD(P)(+)) (337 aa).

The 186-residue stretch at Ala2–Thr187 folds into the KARI N-terminal Rossmann domain. NADP(+)-binding positions include Phe25–Gln28, Arg48, and Asp88–Gln91. Residue His113 is part of the active site. Gly139 lines the NADP(+) pocket. The 146-residue stretch at Ser188–Leu333 folds into the KARI C-terminal knotted domain. Mg(2+)-binding residues include Asp196, Glu200, Glu232, and Glu236. Ser257 lines the substrate pocket.

It belongs to the ketol-acid reductoisomerase family. Mg(2+) is required as a cofactor.

The catalysed reaction is (2R)-2,3-dihydroxy-3-methylbutanoate + NAD(+) = (2S)-2-acetolactate + NADH + H(+). It carries out the reaction (2R)-2,3-dihydroxy-3-methylbutanoate + NADP(+) = (2S)-2-acetolactate + NADPH + H(+). Its pathway is amino-acid biosynthesis; L-isoleucine biosynthesis; L-isoleucine from 2-oxobutanoate: step 2/4. It functions in the pathway amino-acid biosynthesis; L-valine biosynthesis; L-valine from pyruvate: step 2/4. In terms of biological role, involved in the biosynthesis of branched-chain amino acids (BCAA). Catalyzes an alkyl-migration followed by a ketol-acid reduction of (S)-2-acetolactate (S2AL) to yield (R)-2,3-dihydroxy-isovalerate. In the isomerase reaction, S2AL is rearranged via a Mg-dependent methyl migration to produce 3-hydroxy-3-methyl-2-ketobutyrate (HMKB). In the reductase reaction, this 2-ketoacid undergoes a metal-dependent reduction by NADPH or NADH to yield (R)-2,3-dihydroxy-isovalerate. The chain is Ketol-acid reductoisomerase (NAD(P)(+)) from Syntrophomonas wolfei subsp. wolfei (strain DSM 2245B / Goettingen).